The chain runs to 162 residues: Ribosome maturation factor RimM (162 aa).

The PRC barrel domain maps to 91–162 (DGSFYIDDLI…LIDVVIIEGM (72 aa)).

The protein belongs to the RimM family. In terms of assembly, binds ribosomal protein uS19.

The protein localises to the cytoplasm. Its function is as follows. An accessory protein needed during the final step in the assembly of 30S ribosomal subunit, possibly for assembly of the head region. Essential for efficient processing of 16S rRNA. May be needed both before and after RbfA during the maturation of 16S rRNA. It has affinity for free ribosomal 30S subunits but not for 70S ribosomes. The chain is Ribosome maturation factor RimM from Finegoldia magna (strain ATCC 29328 / DSM 20472 / WAL 2508) (Peptostreptococcus magnus).